The sequence spans 1366 residues: Agglutinin-like protein 6 (1366 aa).

A signal peptide spans 1–18; it reads MKTVILLHLFFYCTIAMA. 4 disulfides stabilise this stretch: Cys-74/Cys-151, Cys-97/Cys-113, Cys-206/Cys-301, and Cys-228/Cys-257. Residue Asn-294 is glycosylated (N-linked (GlcNAc...) asparagine). ALS repeat units lie at residues 368-399, 404-435, 441-472, 477-508, 513-544, and 549-580; these read TTIT…VDVP, TTIT…VQVP, VTTT…IKEP, VTTT…VREP, and VTTT…IHDP. Residues 449-470 are disordered; sequence GSVPTTETVTTGPQGTDSVIIK. Positions 451–464 are enriched in low complexity; the sequence is VPTTETVTTGPQGT. Disordered regions lie at residues 583–658, 758–780, and 804–833; these read ESSS…TSES, LSSD…FPHT, and VSLT…SDQS. Asn-596 is a glycosylation site (N-linked (GlcNAc...) asparagine). Low complexity-rich tracts occupy residues 758–775 and 805–833; these read LSSD…SPSD and SLTS…SDQS. N-linked (GlcNAc...) asparagine glycosylation occurs at Asn-866. Disordered stretches follow at residues 874 to 915, 928 to 976, 996 to 1040, 1081 to 1130, and 1158 to 1218; these read ESES…STVT, TGMP…TSAS, SETS…KESS, EDNE…VSSV, and ETSL…STNN. Low complexity-rich tracts occupy residues 875 to 889, 898 to 915, and 940 to 958; these read SESS…ASES, SEST…STVT, and TSDV…PTSA. Residues 959–969 are compositionally biased toward polar residues; that stretch reads EQSITDNPNID. A compositionally biased stretch (low complexity) spans 996-1021; that stretch reads SETSTLSSDDSTSSDTSISSTTNSDT. 2 stretches are compositionally biased toward polar residues: residues 1022–1040 and 1085–1107; these read GNIN…KESS and PNTF…SVLS. Low complexity-rich tracts occupy residues 1121 to 1130 and 1158 to 1177; these read VTDTTTVSSV and ETSL…SSGT. Composition is skewed to polar residues over residues 1192 to 1202 and 1209 to 1218; these read TSTDNRLSYST and TYANSGSTNN. N-linked (GlcNAc...) asparagine glycosylation is present at Asn-1273. The GPI-anchor amidated serine moiety is linked to residue Ser-1345. Positions 1346-1366 are cleaved as a propeptide — removed in mature form; the sequence is SATKHPSWLLKFISVALFFFL.

The protein belongs to the ALS family. Post-translationally, the GPI-anchor is attached to the protein in the endoplasmic reticulum and serves to target the protein to the cell surface. There, the glucosamine-inositol phospholipid moiety is cleaved off and the GPI-modified mannoprotein is covalently attached via its lipidless GPI glycan remnant to the 1,6-beta-glucan of the outer cell wall layer.

The protein resides in the cell membrane. It localises to the secreted. Its subcellular location is the cell wall. Its function is as follows. Cell surface adhesion protein which mediates both yeast-to-host tissue adherence and yeast aggregation. Plays an important role in the pathogenesis of C.albicans infections. The sequence is that of Agglutinin-like protein 6 (ALS6) from Candida albicans (strain SC5314 / ATCC MYA-2876) (Yeast).